We begin with the raw amino-acid sequence, 277 residues long: Uracil phosphoribosyltransferase homolog (277 aa).

The tract at residues M1–D69 is disordered. Over residues A37–D69 the composition is skewed to low complexity. GTP is bound by residues R101, R110, and E144–N147. R154 is a 5-phospho-alpha-D-ribose 1-diphosphate binding site. The GTP site is built by R171 and R200. Y206–T214 is a binding site for 5-phospho-alpha-D-ribose 1-diphosphate. Residue T267 to F269 coordinates uracil.

This sequence belongs to the UPRTase family.

The protein localises to the cytoplasm. It localises to the nucleus. In Gallus gallus (Chicken), this protein is Uracil phosphoribosyltransferase homolog (UPRT).